The chain runs to 316 residues: MTQGKLSVANKAPGTEGQQQANGEKKETPAVPSAPPSYEEATSGEGLKAGAFPPAPSAVPLHPSWAYVDPNSSSSYESGFPTGDHEFFTTFSWDDQKVRRVFIRKVYTILLIQLLVTLGVVALFTFCDPVKDYVQANPGWYWASYAVFFATYLTLACCSGPRRHFPWNLILLTIFTLSMAYLTGMLSSYYNTTSVLLCLSITALVCLSVTVFSFQTKFDFTSCQGVLFVLLMTLFFSGLILAILLPFQYVPWLHAVYAVLGAGVFTLFLAFDTQLLMGSRRHSLSPEEYIFGALNIYLDIIYIFTFFLQLFGTNRE.

A disordered region spans residues 1 to 46 (MTQGKLSVANKAPGTEGQQQANGEKKETPAVPSAPPSYEEATSGEG). 3 helical membrane passes run 106–126 (VYTILLIQLLVTLGVVALFTF), 138–158 (PGWYWASYAVFFATYLTLACC), and 165–185 (FPWNLILLTIFTLSMAYLTGM). The N-linked (GlcNAc...) asparagine glycan is linked to asparagine 191. A run of 4 helical transmembrane segments spans residues 194–214 (SVLLCLSITALVCLSVTVFSF), 225–245 (GVLFVLLMTLFFSGLILAILL), 251–271 (PWLHAVYAVLGAGVFTLFLAF), and 290–310 (IFGALNIYLDIIYIFTFFLQL).

Belongs to the BI1 family. LFG subfamily. As to quaternary structure, interacts with FAS/TNFRSF6 and BAX.

Its subcellular location is the cell membrane. It localises to the membrane raft. It is found in the postsynaptic cell membrane. Its function is as follows. Antiapoptotic protein which protects cells uniquely from Fas-induced apoptosis. Regulates Fas-mediated apoptosis in neurons by interfering with caspase-8 activation. Plays a role in cerebellar development by affecting cerebellar size, internal granular layer (IGL) thickness, and Purkinje cell (PC) development. In Bos taurus (Bovine), this protein is Protein lifeguard 2 (FAIM2).